The following is a 348-amino-acid chain: Heat-inducible transcription repressor HrcA (348 aa).

Belongs to the HrcA family.

Functionally, negative regulator of class I heat shock genes (grpE-dnaK-dnaJ and groELS operons). Prevents heat-shock induction of these operons. The protein is Heat-inducible transcription repressor HrcA of Thermomicrobium roseum (strain ATCC 27502 / DSM 5159 / P-2).